The following is a 432-amino-acid chain: CinA-like protein (432 aa).

Belongs to the CinA family.

The sequence is that of CinA-like protein from Colwellia psychrerythraea (strain 34H / ATCC BAA-681) (Vibrio psychroerythus).